The chain runs to 786 residues: Digalactosyldiacylglycerol synthase 1, chloroplastic (786 aa).

A chloroplast-targeting transit peptide spans 1 to 25 (MASQRQPPSSSNAFSFLSKGWREVR).

The protein belongs to the glycosyltransferase group 1 family. Glycosyltransferase 4 subfamily. In terms of tissue distribution, high expression in nodules infected cells, but low in nodule inner cortex and root central cylinder.

Its subcellular location is the plastid. It localises to the chloroplast outer membrane. The protein localises to the plastid outer membrane. The catalysed reaction is a 1,2-diacyl-3-O-(beta-D-galactosyl)-sn-glycerol + UDP-alpha-D-galactose = a 1,2-diacyl-3-O-[alpha-D-galactosyl-(1-&gt;6)-beta-D-galactosyl]-sn-glycerol + UDP + H(+). Functionally, involved in the synthesis of diacylglycerol galactolipids that are specifically found in thylakoid and in nodule peribacteroid membranes. Specific for alpha-glycosidic linkages. This is Digalactosyldiacylglycerol synthase 1, chloroplastic from Lotus japonicus (Lotus corniculatus var. japonicus).